Here is a 146-residue protein sequence, read N- to C-terminus: Hemoglobin subunit beta (146 aa).

The Globin domain occupies 2-146; that stretch reads HWTAEEKQLI…VAHALARKYH (145 aa). Heme b-binding residues include histidine 63 and histidine 92.

This sequence belongs to the globin family. Heterotetramer of two alpha chains and two beta chains. Red blood cells.

Involved in oxygen transport from the lung to the various peripheral tissues. The sequence is that of Hemoglobin subunit beta (HBB) from Aquila chrysaetos (Golden eagle).